The sequence spans 318 residues: MSMPGINVSNLLNEHEELGLRLLAGEKGLTNRINMSEINRPGLSLTGFYESFAHDRIQIFGKGEWAYITSRIPEDLKNIAADFFSFHLNCIIFTHGNMPPPIFTENCERLAIPLMISDVSTHKFITLISGILDRSLAPRTMRHGVLIEVFGIGILLSGKSGVGKSETALELIERGHRLVADDMVEIRRLSESYLIGTCSDLLRHHMEIRGLGILNIKDIFGIGSVRDHKLIELIIRLEEWTEDKDFDRTGLENPTEELLGVQIPLIRVPVKPGRNIPIIVETAAMNQRLRKLGKNAAQEFNQKLSNYLQQGKVERNPP.

Residues His143 and Lys164 contribute to the active site. Residue 158 to 165 (GKSGVGKS) coordinates ATP. Ser165 is a Mg(2+) binding site. Catalysis depends on Asp182, which acts as the Proton acceptor; for phosphorylation activity. Proton donor; for dephosphorylation activity. Positions 206–215 (MEIRGLGILN) are important for the catalytic mechanism of both phosphorylation and dephosphorylation. Residue Glu207 participates in Mg(2+) binding. Residue Arg248 is part of the active site. The important for the catalytic mechanism of dephosphorylation stretch occupies residues 269-274 (PVKPGR).

It belongs to the HPrK/P family. Homohexamer. Mg(2+) serves as cofactor.

The enzyme catalyses [HPr protein]-L-serine + ATP = [HPr protein]-O-phospho-L-serine + ADP + H(+). It catalyses the reaction [HPr protein]-O-phospho-L-serine + phosphate + H(+) = [HPr protein]-L-serine + diphosphate. Its function is as follows. Catalyzes the ATP- as well as the pyrophosphate-dependent phosphorylation of a specific serine residue in HPr, a phosphocarrier protein of the phosphoenolpyruvate-dependent sugar phosphotransferase system (PTS). HprK/P also catalyzes the pyrophosphate-producing, inorganic phosphate-dependent dephosphorylation (phosphorolysis) of seryl-phosphorylated HPr (P-Ser-HPr). This is HPr kinase/phosphorylase from Leptospira borgpetersenii serovar Hardjo-bovis (strain JB197).